Consider the following 660-residue polypeptide: Anoctamin-10 (660 aa).

At Met1–Thr207 the chain is on the cytoplasmic side. The helical transmembrane segment at Ile208–Ile228 threads the bilayer. Residues Gly229 to Tyr240 lie on the Extracellular side of the membrane. A helical membrane pass occupies residues Asp241–Trp261. Over Lys262–Leu316 the chain is Cytoplasmic. A helical transmembrane segment spans residues Val317–Phe337. The Extracellular segment spans residues Asp338–Ser352. Residues Glu353 to Met373 form a helical membrane-spanning segment. The Cytoplasmic portion of the chain corresponds to Asn374–Leu400. The helical transmembrane segment at Ile401–Phe421 threads the bilayer. The Extracellular segment spans residues Val422–Glu500. Residues Leu501 to Phe521 traverse the membrane as a helical segment. Residues Ala522–Gly553 lie on the Cytoplasmic side of the membrane. The helical transmembrane segment at Val554–Ile574 threads the bilayer. Over Gly575–Asp590 the chain is Extracellular. A helical transmembrane segment spans residues Leu591–Phe611. The Cytoplasmic portion of the chain corresponds to Ala612–Thr660.

The protein belongs to the anoctamin family. In terms of tissue distribution, highly expressed in the brain. Intermediate levels in the retina and heart and low levels in the placenta, liver, lung, duodenum, kidney, testis and spleen. In brain areas, highest expression in the frontal and occipital cortices and in the cerebellum. Lower expression in the fetal brain than in the adult brain.

It localises to the cell membrane. Its function is as follows. Does not exhibit calcium-activated chloride channel (CaCC) activity. Can inhibit the activity of ANO1. In Homo sapiens (Human), this protein is Anoctamin-10 (ANO10).